The primary structure comprises 349 residues: E3 ubiquitin-protein ligase SINA-like 10 (349 aa).

Residues 1-77 (MARFSVCGGD…STSDDSDREV (77 aa)) form a disordered region. The RING-type; degenerate zinc finger occupies 113-149 (CPICCEPLKIPIFQCDNGHLACTLCCTKVRNRCPSCT). Residues 163–344 (VIEASRVSCL…NLQIWIGHGR (182 aa)) form an SBD region. An SIAH-type zinc finger spans residues 166–224 (ASRVSCLNAKYGCKESTSYGNRFSHEQVCVFTPCSCPILDCHYTGYYKDLNNHVRAEHK). The Zn(2+) site is built by Cys171, Cys178, His190, Cys194, Cys201, Cys206, His218, and His223.

This sequence belongs to the SINA (Seven in absentia) family.

It carries out the reaction S-ubiquitinyl-[E2 ubiquitin-conjugating enzyme]-L-cysteine + [acceptor protein]-L-lysine = [E2 ubiquitin-conjugating enzyme]-L-cysteine + N(6)-ubiquitinyl-[acceptor protein]-L-lysine.. The protein operates within protein modification; protein ubiquitination. In terms of biological role, E3 ubiquitin-protein ligase that mediates ubiquitination and subsequent proteasomal degradation of target proteins. E3 ubiquitin ligases accept ubiquitin from an E2 ubiquitin-conjugating enzyme in the form of a thioester and then directly transfers the ubiquitin to targeted substrates. It probably triggers the ubiquitin-mediated degradation of different substrates. In Arabidopsis thaliana (Mouse-ear cress), this protein is E3 ubiquitin-protein ligase SINA-like 10.